The following is a 404-amino-acid chain: Cysteine desulfurase IscS (404 aa).

Pyridoxal 5'-phosphate-binding positions include 73–74 (AT), Asn153, Gln181, and 201–203 (SAH). Position 204 is an N6-(pyridoxal phosphate)lysine (Lys204). Position 241 (Thr241) interacts with pyridoxal 5'-phosphate. The Cysteine persulfide intermediate role is filled by Cys327. Residue Cys327 participates in [2Fe-2S] cluster binding.

It belongs to the class-V pyridoxal-phosphate-dependent aminotransferase family. NifS/IscS subfamily. In terms of assembly, homodimer. Forms a heterotetramer with IscU, interacts with other sulfur acceptors. The cofactor is pyridoxal 5'-phosphate.

The protein localises to the cytoplasm. It carries out the reaction (sulfur carrier)-H + L-cysteine = (sulfur carrier)-SH + L-alanine. It functions in the pathway cofactor biosynthesis; iron-sulfur cluster biosynthesis. Master enzyme that delivers sulfur to a number of partners involved in Fe-S cluster assembly, tRNA modification or cofactor biosynthesis. Catalyzes the removal of elemental sulfur atoms from cysteine to produce alanine. Functions as a sulfur delivery protein for Fe-S cluster synthesis onto IscU, an Fe-S scaffold assembly protein, as well as other S acceptor proteins. This Anaeromyxobacter dehalogenans (strain 2CP-C) protein is Cysteine desulfurase IscS.